The sequence spans 287 residues: Energy-coupling factor transporter ATP-binding protein EcfA2 (287 aa).

Positions 3-246 constitute an ABC transporter domain; that stretch reads VKFSQVSYVY…TNYVNQLHLD (244 aa). Residue 40–47 coordinates ATP; that stretch reads GQTGSGKS.

Belongs to the ABC transporter superfamily. Energy-coupling factor EcfA family. In terms of assembly, forms a stable energy-coupling factor (ECF) transporter complex composed of 2 membrane-embedded substrate-binding proteins (S component), 2 ATP-binding proteins (A component) and 2 transmembrane proteins (T component).

The protein resides in the cell membrane. Its function is as follows. ATP-binding (A) component of a common energy-coupling factor (ECF) ABC-transporter complex. Unlike classic ABC transporters this ECF transporter provides the energy necessary to transport a number of different substrates. The polypeptide is Energy-coupling factor transporter ATP-binding protein EcfA2 (Staphylococcus saprophyticus subsp. saprophyticus (strain ATCC 15305 / DSM 20229 / NCIMB 8711 / NCTC 7292 / S-41)).